Reading from the N-terminus, the 192-residue chain is Aminodeoxychorismate synthase component 2 (192 aa).

The 190-residue stretch at 3 to 192 (SVLMIDNCDS…LANLIHRPCH (190 aa)) folds into the Glutamine amidotransferase type-1 domain. Active-site residues include Cys-83, His-170, and Glu-172.

In terms of assembly, monomer. Heterodimer consisting of two non-identical subunits: a glutamine amidotransferase subunit (PabA) and a aminodeoxychorismate synthase subunit (PabB).

The enzyme catalyses chorismate + L-glutamine = 4-amino-4-deoxychorismate + L-glutamate. It participates in cofactor biosynthesis; tetrahydrofolate biosynthesis; 4-aminobenzoate from chorismate: step 1/2. Part of a heterodimeric complex that catalyzes the two-step biosynthesis of 4-amino-4-deoxychorismate (ADC), a precursor of p-aminobenzoate (PABA) and tetrahydrofolate. In the first step, a glutamine amidotransferase (PabA) generates ammonia as a substrate that, along with chorismate, is used in the second step, catalyzed by aminodeoxychorismate synthase (PabB) to produce ADC. PabA converts glutamine into glutamate only in the presence of stoichiometric amounts of PabB. In Streptomyces lividans, this protein is Aminodeoxychorismate synthase component 2.